The primary structure comprises 238 residues: Dolichyldiphosphatase 1 (238 aa).

4 helical membrane-spanning segments follow: residues 33-53, 100-120, 130-150, and 162-182; these read LAYL…LIIF, PSSH…FLYL, FLDL…AFLV, and WSQV…WFII.

The protein belongs to the dolichyldiphosphatase family. Widely expressed with highest levels in brain, kidney, lung and intestine.

It localises to the endoplasmic reticulum membrane. It catalyses the reaction a di-trans,poly-cis-dolichyl diphosphate + H2O = a di-trans,poly-cis-dolichyl phosphate + phosphate + H(+). Its pathway is protein modification; protein glycosylation. Functionally, required for efficient N-glycosylation. Necessary for maintaining optimal levels of dolichol-linked oligosaccharides. Hydrolyzes dolichyl pyrophosphate at a very high rate and dolichyl monophosphate at a much lower rate. Does not act on phosphatidate. The protein is Dolichyldiphosphatase 1 (Dolpp1) of Mus musculus (Mouse).